A 304-amino-acid polypeptide reads, in one-letter code: Virulence protein VirA (304 aa).

Could be involved in the biosynthesis of a major surface antigen important for virulence. The chain is Virulence protein VirA (virA) from Vibrio anguillarum (strain ATCC 68554 / 775) (Listonella anguillarum).